The following is a 364-amino-acid chain: D-alanine--D-alanine ligase (364 aa).

The ATP-grasp domain occupies 134-347 (RRLACINGLK…YPDLLDELIN (214 aa)). Position 167 to 222 (167 to 222 (ASEFGWPLFVKPCSLGSSVGIHKANNMDELNAAVADALRYDEEILVEEFIVGREIE)) interacts with ATP. 3 residues coordinate Mg(2+): D300, E314, and N316.

This sequence belongs to the D-alanine--D-alanine ligase family. Mg(2+) serves as cofactor. Requires Mn(2+) as cofactor.

It localises to the cytoplasm. It catalyses the reaction 2 D-alanine + ATP = D-alanyl-D-alanine + ADP + phosphate + H(+). Its pathway is cell wall biogenesis; peptidoglycan biosynthesis. Cell wall formation. This Legionella pneumophila (strain Lens) protein is D-alanine--D-alanine ligase.